The following is a 303-amino-acid chain: Cytidine deaminase (303 aa).

CMP/dCMP-type deaminase domains follow at residues Thr-57 to Asp-172 and Ile-196 to Ser-303. Residue Asn-98–Glu-100 coordinates substrate. Residue His-111 participates in Zn(2+) binding. The Proton donor role is filled by Glu-113. 2 residues coordinate Zn(2+): Cys-138 and Cys-141.

The protein belongs to the cytidine and deoxycytidylate deaminase family. Homodimer. Zn(2+) is required as a cofactor.

It carries out the reaction cytidine + H2O + H(+) = uridine + NH4(+). The enzyme catalyses 2'-deoxycytidine + H2O + H(+) = 2'-deoxyuridine + NH4(+). Functionally, this enzyme scavenges exogenous and endogenous cytidine and 2'-deoxycytidine for UMP synthesis. This is Cytidine deaminase from Histophilus somni (strain 2336) (Haemophilus somnus).